Consider the following 772-residue polypeptide: Protein transport protein SEC23 F (772 aa).

Residues Cys-65, Cys-68, Cys-87, and Cys-90 each coordinate Zn(2+). The zinc finger-like stretch occupies residues 65–90; that stretch reads CKTCKALLNAFARVDFAAMNWVCPFC.

This sequence belongs to the SEC23/SEC24 family. SEC23 subfamily. As to quaternary structure, component of the coat protein complex II (COPII), composed of at least five proteins: the Sec23/24 complex, the Sec13/31 complex and Sar1. Interacts with SEC24A.

The protein localises to the cytoplasmic vesicle. Its subcellular location is the COPII-coated vesicle membrane. The protein resides in the endoplasmic reticulum membrane. It localises to the membrane. Its function is as follows. Component of the coat protein complex II (COPII) which promotes the formation of transport vesicles from the endoplasmic reticulum (ER). The coat has two main functions, the physical deformation of the endoplasmic reticulum membrane into vesicles and the selection of cargo molecules. This Arabidopsis thaliana (Mouse-ear cress) protein is Protein transport protein SEC23 F.